Here is a 71-residue protein sequence, read N- to C-terminus: Dermaseptin-PT9 (71 aa).

The N-terminal stretch at 1 to 22 is a signal peptide; the sequence is MAFLKKSLFLVLFLGLVSLSIC. Residues 23–43 constitute a propeptide that is removed on maturation; the sequence is EEEKRENEMEQEDDEQSEMKR. Residue Val-68 is modified to Valine amide. Residues 69–71 constitute a propeptide that is removed on maturation; sequence GEQ.

It belongs to the frog skin active peptide (FSAP) family. Dermaseptin subfamily. Expressed by the skin glands.

The protein localises to the secreted. Its subcellular location is the target cell membrane. Functionally, antimicrobial peptide with activity against fungi, Gram-positive and Gram-negative bacteria. Is active against S.aureus (MIC=16 uM), MRSA (MIC=32 uM), E.faecalis (MIC=16 uM), E.coli (MIC=8 uM), P.aeruginosa (MIC=16 uM), K.pneumoniae (MIC=8 uM), and C.albicans (MIC=64 uM). Also inhibits biofilm formation. Acts by disrupting cell membranes. Also exhibits anti-proliferative effect against various human cancer cells. Shows weak hemolytic activity towards horse erythrocytes. The protein is Dermaseptin-PT9 of Phyllomedusa tarsius (Brownbelly leaf frog).